A 985-amino-acid polypeptide reads, in one-letter code: Cation channel sperm-associated auxiliary subunit epsilon (985 aa).

Positions 1-35 (MPSAGQRKPGSLLALQALQKWLLRGGVGAMLARQV) are cleaved as a signal peptide. Topologically, residues 36–937 (VAALLLWLSC…ESLGMIPRSS (902 aa)) are extracellular. 4 disulfides stabilise this stretch: C87–C101, C130–C235, C275–C365, and C439–C442. 3 N-linked (GlcNAc...) asparagine glycosylation sites follow: N91, N143, and N292. 3 N-linked (GlcNAc...) asparagine glycosylation sites follow: N502, N517, and N565. Intrachain disulfides connect C617–C724, C737–C919, C753–C786, and C838–C869. N-linked (GlcNAc...) asparagine glycosylation occurs at N749. N-linked (GlcNAc...) asparagine glycosylation occurs at N830. N888, N915, and N920 each carry an N-linked (GlcNAc...) asparagine glycan. The helical transmembrane segment at 938–958 (VYLVAALIFVLMLTFISILVL) threads the bilayer. Residues 959 to 985 (SYFWYLKIYRQFIIEPLHKRPAKQKKN) are Cytoplasmic-facing.

This sequence belongs to the CATSPERD family. As to quaternary structure, component of the CatSper complex or CatSpermasome composed of the core pore-forming members CATSPER1, CATSPER2, CATSPER3 and CATSPER4 as well as auxiliary members CATSPERB, CATSPERG2, CATSPERD, CATSPERE, CATSPERZ, C2CD6/CATSPERT, SLCO6C1, TMEM249, TMEM262 and EFCAB9. HSPA1 may be an additional auxiliary complex member. The core complex members CATSPER1, CATSPER2, CATSPER3 and CATSPER4 form a heterotetrameric channel. The auxiliary CATSPERB, CATSPERG2, CATSPERD and CATSPERE subunits form a pavilion-like structure over the pore which stabilizes the complex through interactions with CATSPER4, CATSPER3, CATSPER1 and CATSPER2 respectively. SLCO6C1 interacts with CATSPERE and TMEM262/CATSPERH interacts with CATSPERB, further stabilizing the complex. C2CD6/CATSPERT interacts at least with CATSPERD and is required for targeting the CatSper complex in the flagellar membrane. As to expression, testis-specific.

It localises to the cell projection. Its subcellular location is the cilium. The protein resides in the flagellum membrane. In terms of biological role, auxiliary component of the CatSper complex, a complex involved in sperm cell hyperactivation. Sperm cell hyperactivation is needed for sperm motility which is essential late in the preparation of sperm for fertilization. This chain is Cation channel sperm-associated auxiliary subunit epsilon, found in Mus musculus (Mouse).